The sequence spans 1531 residues: Multidrug resistance-associated protein 1 (1531 aa).

Residues 1 to 33 (MALRGFCSADGSDPLWDWNVTWYTSNPDFTKCF) are Extracellular-facing. An N-linked (GlcNAc...) asparagine glycan is attached at Asn19. The helical transmembrane segment at 34–54 (QNTVLVWVPCFYLWACFPFYF) threads the bilayer. At 55–74 (LYLSRHDRGYIQMTLLNKTK) the chain is on the cytoplasmic side. The chain crosses the membrane as a helical span at residues 75-95 (TALGFLLWIVCWADLFYSFWE). Topologically, residues 96–100 (RSRGI) are extracellular. Residues 101-121 (FLAPVFLVSPTLLGITMLLAT) form a helical membrane-spanning segment. At 122 to 133 (FLIQLERRKGVQ) the chain is on the cytoplasmic side. The helical transmembrane segment at 134 to 154 (SSGIMLTFWLVALLCALAILR) threads the bilayer. The Extracellular portion of the chain corresponds to 155–172 (SKIMTALKEDVQVDLFRD). Residues 173-193 (MTFYVYFSLVLIQLVLSCFSD) traverse the membrane as a helical segment. The Cytoplasmic portion of the chain corresponds to 194 to 316 (RSPLFSETIH…KEWNPSLFKV (123 aa)). A Phosphotyrosine modification is found at Tyr277. Ser289 carries the phosphoserine modification. The chain crosses the membrane as a helical span at residues 317–337 (LYKTFGPYFLMSFFFKAIHDL). The region spanning 325-608 (FLMSFFFKAI…LPMVISSIVQ (284 aa)) is the ABC transmembrane type-1 1 domain. Residues 338 to 363 (MMFSGPEILKLLINFVNDTKAPDWQG) are Extracellular-facing. A helical membrane pass occupies residues 364-384 (YFYTALLFVAACLQTLVLHQY). Topologically, residues 385-440 (FHICFVSGMRIKTAVIGAVYRKALVITNAARKSSTVGEIVNLMSVDAQRFMDLATY) are cytoplasmic. A helical transmembrane segment spans residues 441-461 (INMIWSAPLQVILALYLLWRN). The Extracellular portion of the chain corresponds to 462 to 464 (LGP). The helical transmembrane segment at 465-485 (PILAGVAVMVLMVPVNAVMAM) threads the bilayer. Residues 486–547 (KTKTYQVAHM…VLKKSAYLAA (62 aa)) are Cytoplasmic-facing. An N6-succinyllysine modification is found at Lys503. The chain crosses the membrane as a helical span at residues 548-568 (VGTFTWVCTPFLVALCTFAVY). The Extracellular segment spans residues 569–590 (VTIDKNNVLDAQKAFVSLALFN). A helical transmembrane segment spans residues 591–611 (ILRFPLNILPMVISSIVQASV). Residues 612–967 (SLKRLRIFLS…VKLSVYWDYM (356 aa)) are Cytoplasmic-facing. An ABC transporter 1 domain is found at 644–868 (ITVRNATFTW…DGAFAEFLRT (225 aa)). 678–685 (GQVGCGKS) is a binding site for ATP. The interval 871–893 (SAEQEQDPEDNGVTGVSGPGKEA) is disordered. A phosphoserine mark is found at Ser905, Ser915, and Ser930. A disordered region spans residues 917–938 (SSSYSGDVSRQHNSTAELQKDG). The span at 922 to 933 (GDVSRQHNSTAE) shows a compositional bias: polar residues. A helical membrane pass occupies residues 968-988 (KAIGLFISFLSIFLFICNHVA). An ABC transmembrane type-1 2 domain is found at 975–1256 (SFLSIFLFIC…LVRMSSEMET (282 aa)). The Extracellular portion of the chain corresponds to 989–1025 (ALASNYWLSLWTDDPIVNGTQEHTKVRLSVYGALGIS). Asn1006 carries an N-linked (GlcNAc...) asparagine glycan. Residues 1026 to 1046 (QGIAVFGYSMAVSIGGILASR) form a helical membrane-spanning segment. Over 1047–1089 (CLHVDLLHSILRSPMSFFERTPSGNLVNRFSKELDTVDSMIPE) the chain is Cytoplasmic. The helical transmembrane segment at 1090–1110 (VIKMFMGSLFNVIGACIVILL) threads the bilayer. Ala1111 is a topological domain (extracellular). Residues 1112 to 1132 (TPIAAIIIPPLGLIYFFVQRF) form a helical membrane-spanning segment. The Cytoplasmic portion of the chain corresponds to 1133-1203 (YVASSRQLKR…VANRWLAVRL (71 aa)). The helical transmembrane segment at 1204-1224 (ECVGNCIVLFAALFAVISRHS) threads the bilayer. The Extracellular portion of the chain corresponds to 1225 to 1226 (LS). Residues 1227 to 1247 (AGLVGLSVSYSLQVTTYLNWL) traverse the membrane as a helical segment. At 1248–1531 (VRMSSEMETN…YNMARDAGLV (284 aa)) the chain is on the cytoplasmic side. The region spanning 1293-1527 (VEFRNYCLRY…RGLFYNMARD (235 aa)) is the ABC transporter 2 domain. 1327-1334 (GRTGAGKS) is an ATP binding site.

This sequence belongs to the ABC transporter superfamily. ABCC family. Conjugate transporter (TC 3.A.1.208) subfamily.

The protein resides in the cell membrane. It is found in the basolateral cell membrane. It carries out the reaction ATP + H2O + xenobioticSide 1 = ADP + phosphate + xenobioticSide 2.. It catalyses the reaction an S-substituted glutathione(in) + ATP + H2O = an S-substituted glutathione(out) + ADP + phosphate + H(+). The enzyme catalyses sphing-4-enine 1-phosphate(in) + ATP + H2O = sphing-4-enine 1-phosphate(out) + ADP + phosphate + H(+). The catalysed reaction is leukotriene C4(in) + ATP + H2O = leukotriene C4(out) + ADP + phosphate + H(+). It carries out the reaction 17beta-estradiol 17-O-(beta-D-glucuronate)(in) + ATP + H2O = 17beta-estradiol 17-O-(beta-D-glucuronate)(out) + ADP + phosphate + H(+). It catalyses the reaction daunorubicin(in) + ATP + H2O = daunorubicin(out) + ADP + phosphate + H(+). The enzyme catalyses vincristine(in) + ATP + H2O = vincristine(out) + ADP + phosphate + H(+). The catalysed reaction is 2',3'-cGAMP(in) + ATP + H2O = 2',3'-cGAMP(out) + ADP + phosphate + H(+). It carries out the reaction S-[(2E,6E,10E)-geranylgeranyl]-L-glutathione(in) + ATP + H2O = S-[(2E,6E,10E)-geranylgeranyl]-L-glutathione(out) + ADP + phosphate + H(+). It catalyses the reaction prostaglandin A2-S-(R)-glutathione(in) + ATP + H2O = prostaglandin A2-S-(R)-glutathione(out) + ADP + phosphate + H(+). The enzyme catalyses prostaglandin A2-S-(S)-glutathione(in) + ATP + H2O = prostaglandin A2-S-(S)-glutathione(out) + ADP + phosphate + H(+). Its activity is regulated as follows. MK 571 inhibits sphingosine 1-phosphate and leukotriene C4 export. Mediates export of organic anions and drugs from the cytoplasm. Mediates ATP-dependent transport of glutathione and glutathione conjugates, leukotriene C4, estradiol-17-beta-o-glucuronide, methotrexate, antiviral drugs and other xenobiotics. Confers resistance to anticancer drugs by decreasing accumulation of drug in cells, and by mediating ATP- and GSH-dependent drug export. Hydrolyzes ATP with low efficiency. Catalyzes the export of sphingosine 1-phosphate from mast cells independently of their degranulation. Participates in inflammatory response by allowing export of leukotriene C4 from leukotriene C4-synthesizing cells. Mediates ATP-dependent, GSH-independent cyclic GMP-AMP (cGAMP) export. Thus, by limiting intracellular cGAMP concentrations negatively regulates the cGAS-STING pathway. Exports S-geranylgeranyl-glutathione (GGG) in lymphoid cells and stromal compartments of lymphoid organs. ABCC1 (via extracellular transport) with GGT5 (via GGG catabolism) establish GGG gradients within lymphoid tissues to position P2RY8-positive lymphocytes at germinal centers in lymphoid follicles and restrict their chemotactic transmigration from blood vessels to the bone marrow parenchyma. Mediates basolateral export of GSH-conjugated R- and S-prostaglandin A2 diastereomers in polarized epithelial cells. This Macaca fascicularis (Crab-eating macaque) protein is Multidrug resistance-associated protein 1.